Reading from the N-terminus, the 189-residue chain is Peptidyl-tRNA hydrolase (189 aa).

Tyrosine 15 lines the tRNA pocket. Histidine 20 acts as the Proton acceptor in catalysis. TRNA contacts are provided by phenylalanine 66, asparagine 68, and asparagine 114.

The protein belongs to the PTH family. In terms of assembly, monomer.

It is found in the cytoplasm. The enzyme catalyses an N-acyl-L-alpha-aminoacyl-tRNA + H2O = an N-acyl-L-amino acid + a tRNA + H(+). In terms of biological role, hydrolyzes ribosome-free peptidyl-tRNAs (with 1 or more amino acids incorporated), which drop off the ribosome during protein synthesis, or as a result of ribosome stalling. Its function is as follows. Catalyzes the release of premature peptidyl moieties from peptidyl-tRNA molecules trapped in stalled 50S ribosomal subunits, and thus maintains levels of free tRNAs and 50S ribosomes. The protein is Peptidyl-tRNA hydrolase of Streptococcus pneumoniae (strain Taiwan19F-14).